Reading from the N-terminus, the 126-residue chain is Aspartate 1-decarboxylase (126 aa).

Residue serine 25 is the Schiff-base intermediate with substrate; via pyruvic acid of the active site. Serine 25 carries the pyruvic acid (Ser) modification. Threonine 57 is a substrate binding site. Tyrosine 58 (proton donor) is an active-site residue. 73 to 75 (GAA) provides a ligand contact to substrate.

Belongs to the PanD family. As to quaternary structure, heterooctamer of four alpha and four beta subunits. Requires pyruvate as cofactor. Post-translationally, is synthesized initially as an inactive proenzyme, which is activated by self-cleavage at a specific serine bond to produce a beta-subunit with a hydroxyl group at its C-terminus and an alpha-subunit with a pyruvoyl group at its N-terminus.

It localises to the cytoplasm. It carries out the reaction L-aspartate + H(+) = beta-alanine + CO2. It participates in cofactor biosynthesis; (R)-pantothenate biosynthesis; beta-alanine from L-aspartate: step 1/1. Its function is as follows. Catalyzes the pyruvoyl-dependent decarboxylation of aspartate to produce beta-alanine. This is Aspartate 1-decarboxylase from Pseudomonas fluorescens.